The following is a 326-amino-acid chain: Microtubule-associated protein RP/EB family member 2 (326 aa).

Ser9 is modified (phosphoserine). In terms of domain architecture, Calponin-homology (CH) spans 56–158 (TMSRHDIIAW…FIQWFKKFYD (103 aa)). Tyr166 is modified (phosphotyrosine). Disordered regions lie at residues 170–239 (EARQ…DKDL) and 297–326 (YASD…QEEY). Residues 186–326 (QIFNLPKKSH…DQQPQQQEEY (141 aa)) are DCTN1-binding. A compositionally biased stretch (low complexity) spans 199 to 233 (SPTAGAAKSSPASKPGSTPSRPSSAKRASSSGSAS). Ser218 and Ser235 each carry phosphoserine. The EB1 C-terminal domain maps to 235-305 (SDKDLETQVI…LYASDEQEGQ (71 aa)). The interval 258–301 (EGVEKERDFYFGKLREIELLCQEHGQENDDLVQRLMEVLYASDE) is APC-binding. The segment covering 300–312 (DEQEGQTEEPEAE) has biased composition (acidic residues). The span at 317 to 326 (DQQPQQQEEY) shows a compositional bias: low complexity.

This sequence belongs to the MAPRE family. Interacts with DCTN1. Interacts with APC (via C-terminal). Interacts with monomeric and polymerized tubulin. Interacts with SLAIN1. Interacts (via the N-terminal region) with BAG1. Interacts with ASB14. Ubiquitinated in an ASB14-dependent manner; leading to proteasomal degradation. In terms of processing, phosphorylated at Ser-235 by CK2 leading to enhanced cell adhesion. Phosphorylated by CDK1 and AURKB during mitosis reduces the binding affinity of MAPRE2 for microtubules. Expressed during early stages of apico-basal epithelial differentiation but down-regulated in most cells at later stages.

The protein resides in the cytoplasm. It localises to the cytoskeleton. The protein localises to the spindle. In terms of biological role, adapter protein that is involved in microtubule polymerization, and spindle function by stabilizing microtubules and anchoring them at centrosomes. Therefore, ensures mitotic progression and genome stability. Acts as a central regulator of microtubule reorganization in apico-basal epithelial differentiation. Plays a role during oocyte meiosis by regulating microtubule dynamics. Participates in neurite growth by interacting with plexin B3/PLXNB3 and microtubule reorganization during apico-basal epithelial differentiation. Plays also an essential role for cell migration and focal adhesion dynamics. Mechanistically, recruits HAX1 to microtubules in order to regulate focal adhesion dynamics. The sequence is that of Microtubule-associated protein RP/EB family member 2 (Mapre2) from Mus musculus (Mouse).